A 224-amino-acid polypeptide reads, in one-letter code: Small ribosomal subunit protein uS3 (224 aa).

Residues I38–K106 enclose the KH type-2 domain.

It belongs to the universal ribosomal protein uS3 family. Part of the 30S ribosomal subunit. Forms a tight complex with proteins S10 and S14.

Functionally, binds the lower part of the 30S subunit head. Binds mRNA in the 70S ribosome, positioning it for translation. This Lactobacillus acidophilus (strain ATCC 700396 / NCK56 / N2 / NCFM) protein is Small ribosomal subunit protein uS3.